A 493-amino-acid chain; its full sequence is Protein nucleotidyltransferase YdiU (493 aa).

Positions 81, 83, 84, 103, 115, 116, 166, and 173 each coordinate ATP. Catalysis depends on Asp244, which acts as the Proton acceptor. Mg(2+) contacts are provided by Asn245 and Asp254. Asp254 serves as a coordination point for ATP.

This sequence belongs to the SELO family. The cofactor is Mg(2+). Requires Mn(2+) as cofactor.

The catalysed reaction is L-seryl-[protein] + ATP = 3-O-(5'-adenylyl)-L-seryl-[protein] + diphosphate. It carries out the reaction L-threonyl-[protein] + ATP = 3-O-(5'-adenylyl)-L-threonyl-[protein] + diphosphate. It catalyses the reaction L-tyrosyl-[protein] + ATP = O-(5'-adenylyl)-L-tyrosyl-[protein] + diphosphate. The enzyme catalyses L-histidyl-[protein] + UTP = N(tele)-(5'-uridylyl)-L-histidyl-[protein] + diphosphate. The catalysed reaction is L-seryl-[protein] + UTP = O-(5'-uridylyl)-L-seryl-[protein] + diphosphate. It carries out the reaction L-tyrosyl-[protein] + UTP = O-(5'-uridylyl)-L-tyrosyl-[protein] + diphosphate. Functionally, nucleotidyltransferase involved in the post-translational modification of proteins. It can catalyze the addition of adenosine monophosphate (AMP) or uridine monophosphate (UMP) to a protein, resulting in modifications known as AMPylation and UMPylation. The chain is Protein nucleotidyltransferase YdiU from Shewanella frigidimarina (strain NCIMB 400).